Reading from the N-terminus, the 525-residue chain is Probable feruloyl esterase B-1 (525 aa).

The first 20 residues, 1–20 (MMRWFLLIGLASAAATDSSA), serve as a signal peptide directing secretion. Cystine bridges form between Cys26–Cys75, Cys61–Cys114, Cys187–Cys442, Cys256–Cys273, Cys282–Cys292, and Cys502–Cys524. N-linked (GlcNAc...) asparagine glycans are attached at residues Asn51, Asn80, and Asn98. Ser188 functions as the Acyl-ester intermediate in the catalytic mechanism. Positions 257, 260, 262, and 264 each coordinate Ca(2+). N-linked (GlcNAc...) asparagine glycans are attached at residues Asn283, Asn288, and Asn351. Active-site charge relay system residues include Asp401 and His441.

The protein belongs to the tannase family.

Its subcellular location is the secreted. The enzyme catalyses feruloyl-polysaccharide + H2O = ferulate + polysaccharide.. In terms of biological role, involved in degradation of plant cell walls. Hydrolyzes the feruloyl-arabinose ester bond in arabinoxylans as well as the feruloyl-galactose and feruloyl-arabinose ester bonds in pectin. In Neosartorya fischeri (strain ATCC 1020 / DSM 3700 / CBS 544.65 / FGSC A1164 / JCM 1740 / NRRL 181 / WB 181) (Aspergillus fischerianus), this protein is Probable feruloyl esterase B-1 (faeB-1).